An 89-amino-acid chain; its full sequence is Small ribosomal subunit protein uS15 (89 aa).

A disordered region spans residues 1 to 23; sequence MTLNTQEKQKLINTHQNHGTDTG.

It belongs to the universal ribosomal protein uS15 family. As to quaternary structure, part of the 30S ribosomal subunit. Forms a bridge to the 50S subunit in the 70S ribosome, contacting the 23S rRNA.

In terms of biological role, one of the primary rRNA binding proteins, it binds directly to 16S rRNA where it helps nucleate assembly of the platform of the 30S subunit by binding and bridging several RNA helices of the 16S rRNA. Forms an intersubunit bridge (bridge B4) with the 23S rRNA of the 50S subunit in the ribosome. This chain is Small ribosomal subunit protein uS15, found in Prochlorococcus marinus (strain MIT 9211).